Reading from the N-terminus, the 116-residue chain is Large ribosomal subunit protein uL18 (116 aa).

This sequence belongs to the universal ribosomal protein uL18 family. Part of the 50S ribosomal subunit; part of the 5S rRNA/L5/L18/L25 subcomplex. Contacts the 5S and 23S rRNAs.

Its function is as follows. This is one of the proteins that bind and probably mediate the attachment of the 5S RNA into the large ribosomal subunit, where it forms part of the central protuberance. This Teredinibacter turnerae (strain ATCC 39867 / T7901) protein is Large ribosomal subunit protein uL18.